Reading from the N-terminus, the 239-residue chain is Uridylate kinase (239 aa).

Residue 10 to 13 (KFSG) coordinates ATP. Positions 18-23 (GENGFG) are involved in allosteric activation by GTP. Gly52 is a UMP binding site. 2 residues coordinate ATP: Gly53 and Arg57. UMP contacts are provided by residues Asp73 and 134-141 (TGNPYFTT). Residues Thr161, Tyr167, and Asp170 each contribute to the ATP site.

The protein belongs to the UMP kinase family. Homohexamer.

Its subcellular location is the cytoplasm. It carries out the reaction UMP + ATP = UDP + ADP. It functions in the pathway pyrimidine metabolism; CTP biosynthesis via de novo pathway; UDP from UMP (UMPK route): step 1/1. Its activity is regulated as follows. Allosterically activated by GTP. Inhibited by UTP. Catalyzes the reversible phosphorylation of UMP to UDP. This Campylobacter jejuni subsp. jejuni serotype O:2 (strain ATCC 700819 / NCTC 11168) protein is Uridylate kinase.